A 225-amino-acid chain; its full sequence is Small ribosomal subunit protein mS26 (225 aa).

This sequence belongs to the mitochondrion-specific ribosomal protein mS26 family. As to quaternary structure, component of the mitochondrial ribosome small subunit (28S) which comprises a 12S rRNA and about 30 distinct proteins.

The protein resides in the mitochondrion. This chain is Small ribosomal subunit protein mS26 (mRpS26), found in Drosophila melanogaster (Fruit fly).